We begin with the raw amino-acid sequence, 276 residues long: Radial spoke head protein 9 homolog (276 aa).

The protein belongs to the flagellar radial spoke RSP9 family. In terms of assembly, component of the axonemal radial spoke 1 (RS1) and 2 (RS2) complexes, at least composed of spoke head proteins RSPH1, RSPH3, RSPH9 and the cilia-specific component RSPH4A or sperm-specific component RSPH6A, spoke stalk proteins RSPH14, DNAJB13, DYDC1, ROPN1L and NME5, and the RS1 complex-specific anchor protein IQUB. Interacts with IQUB. Interacts with RSPH3B. Interacts with RSPH4A. Interacts with RSPH6A. Interacts with CFAP61. Interacts with LRRC23.

The protein localises to the cytoplasm. It localises to the cytoskeleton. It is found in the cilium axoneme. Its subcellular location is the flagellum axoneme. The protein resides in the cell projection. The protein localises to the kinocilium. Its function is as follows. Functions as part of axonemal radial spoke complexes that play an important part in the motility of sperm and cilia. Essential for both the radial spoke head assembly and the central pair microtubule stability in ependymal motile cilia. Required for motility of olfactory and neural cilia and for the structural integrity of ciliary axonemes in both 9+0 and 9+2 motile cilia. This Bos taurus (Bovine) protein is Radial spoke head protein 9 homolog (RSPH9).